The primary structure comprises 95 residues: UPF0473 protein BPUM_2377 (95 aa).

Belongs to the UPF0473 family.

The chain is UPF0473 protein BPUM_2377 from Bacillus pumilus (strain SAFR-032).